The chain runs to 226 residues: MAIKDWHEEDRPREKLLNLGAEYLTDAEILAIFLRTGSKQQSAIELARSLIDHFGGIAELLAAPKEAVLACHGIGTAKYAQLLASLEMGKRYLNSELKSGNSLNRSQVVKDYITTQIRRESKEVFAVLCLDNGLNLLDYKVLFVGGLSSCSVCVKQVLRHALEQGASQIIIAHNHPNQDATPSAADIHLTQTLKLACEAIDLRLTDHIIVGRNQTLSFAETATAPF.

Positions 102 to 224 (SLNRSQVVKD…TLSFAETATA (123 aa)) constitute an MPN domain. Positions 173, 175, and 186 each coordinate Zn(2+). The JAMM motif motif lies at 173–186 (HNHPNQDATPSAAD).

Belongs to the UPF0758 family.

The protein is UPF0758 protein PsycPRwf_0491 of Psychrobacter sp. (strain PRwf-1).